We begin with the raw amino-acid sequence, 161 residues long: 3-isopropylmalate dehydratase small subunit 1 (161 aa).

This sequence belongs to the LeuD family. LeuD type 2 subfamily. As to quaternary structure, heterodimer of LeuC and LeuD.

It catalyses the reaction (2R,3S)-3-isopropylmalate = (2S)-2-isopropylmalate. Its pathway is amino-acid biosynthesis; L-leucine biosynthesis; L-leucine from 3-methyl-2-oxobutanoate: step 2/4. In terms of biological role, catalyzes the isomerization between 2-isopropylmalate and 3-isopropylmalate, via the formation of 2-isopropylmaleate. In Archaeoglobus fulgidus (strain ATCC 49558 / DSM 4304 / JCM 9628 / NBRC 100126 / VC-16), this protein is 3-isopropylmalate dehydratase small subunit 1 (leuD1).